The following is a 226-amino-acid chain: Cytidylate kinase (226 aa).

Position 10-18 (G10–T18) interacts with ATP.

Belongs to the cytidylate kinase family. Type 1 subfamily.

The protein resides in the cytoplasm. The catalysed reaction is CMP + ATP = CDP + ADP. It carries out the reaction dCMP + ATP = dCDP + ADP. The protein is Cytidylate kinase of Flavobacterium psychrophilum (strain ATCC 49511 / DSM 21280 / CIP 103535 / JIP02/86).